We begin with the raw amino-acid sequence, 418 residues long: UDP-N-acetylglucosamine 1-carboxyvinyltransferase (418 aa).

22 to 23 (KN) provides a ligand contact to phosphoenolpyruvate. R91 contacts UDP-N-acetyl-alpha-D-glucosamine. Catalysis depends on C115, which acts as the Proton donor. At C115 the chain carries 2-(S-cysteinyl)pyruvic acid O-phosphothioketal. UDP-N-acetyl-alpha-D-glucosamine is bound by residues D305 and I327.

Belongs to the EPSP synthase family. MurA subfamily.

It localises to the cytoplasm. The catalysed reaction is phosphoenolpyruvate + UDP-N-acetyl-alpha-D-glucosamine = UDP-N-acetyl-3-O-(1-carboxyvinyl)-alpha-D-glucosamine + phosphate. It participates in cell wall biogenesis; peptidoglycan biosynthesis. Cell wall formation. Adds enolpyruvyl to UDP-N-acetylglucosamine. The protein is UDP-N-acetylglucosamine 1-carboxyvinyltransferase of Aeromonas hydrophila subsp. hydrophila (strain ATCC 7966 / DSM 30187 / BCRC 13018 / CCUG 14551 / JCM 1027 / KCTC 2358 / NCIMB 9240 / NCTC 8049).